The following is a 416-amino-acid chain: Serine hydroxymethyltransferase 1 (416 aa).

Residues leucine 121 and 125 to 127 (GHL) contribute to the (6S)-5,6,7,8-tetrahydrofolate site. Lysine 229 carries the N6-(pyridoxal phosphate)lysine modification. Residues glutamate 245 and 354–356 (SPF) each bind (6S)-5,6,7,8-tetrahydrofolate.

Belongs to the SHMT family. Homodimer. The cofactor is pyridoxal 5'-phosphate.

It localises to the cytoplasm. It carries out the reaction (6R)-5,10-methylene-5,6,7,8-tetrahydrofolate + glycine + H2O = (6S)-5,6,7,8-tetrahydrofolate + L-serine. It functions in the pathway one-carbon metabolism; tetrahydrofolate interconversion. The protein operates within amino-acid biosynthesis; glycine biosynthesis; glycine from L-serine: step 1/1. Functionally, catalyzes the reversible interconversion of serine and glycine with tetrahydrofolate (THF) serving as the one-carbon carrier. This reaction serves as the major source of one-carbon groups required for the biosynthesis of purines, thymidylate, methionine, and other important biomolecules. Also exhibits THF-independent aldolase activity toward beta-hydroxyamino acids, producing glycine and aldehydes, via a retro-aldol mechanism. In Vibrio cholerae serotype O1 (strain ATCC 39315 / El Tor Inaba N16961), this protein is Serine hydroxymethyltransferase 1.